The chain runs to 316 residues: Thioredoxin reductase (316 aa).

36–43 (ERGIPGGQ) provides a ligand contact to FAD. A disulfide bridge connects residues cysteine 135 and cysteine 138. Residue 278–287 (DIREKSLRQI) coordinates FAD.

It belongs to the class-II pyridine nucleotide-disulfide oxidoreductase family. In terms of assembly, homodimer. It depends on FAD as a cofactor.

The protein localises to the cytoplasm. It carries out the reaction [thioredoxin]-dithiol + NADP(+) = [thioredoxin]-disulfide + NADPH + H(+). The protein is Thioredoxin reductase (trxB) of Bacillus subtilis (strain 168).